Here is a 356-residue protein sequence, read N- to C-terminus: GDSL esterase/lipase At5g37690 (356 aa).

An N-terminal signal peptide occupies residues 1–18; it reads MMILRLALAIVISTYATA. S34 acts as the Nucleophile in catalysis. 2 N-linked (GlcNAc...) asparagine glycosylation sites follow: N116 and N291. Catalysis depends on residues D322 and H325.

It belongs to the 'GDSL' lipolytic enzyme family.

The protein resides in the secreted. The polypeptide is GDSL esterase/lipase At5g37690 (Arabidopsis thaliana (Mouse-ear cress)).